Reading from the N-terminus, the 246-residue chain is Polyhedrin (246 aa).

This sequence belongs to the polyhedrin family.

Major component of the virus occlusion bodies, which are large proteinaceous structures (polyhedra), that protect the virus from the outside environment for extended periods until they are ingested by insect larvae. This Lepidoptera (butterflies and moths) protein is Polyhedrin (PH).